Consider the following 256-residue polypeptide: Transmembrane protein 74B (256 aa).

Residues 1-111 are disordered; sequence MPPAQGYEFA…LSLHSEEGPA (111 aa). Residues 80 to 96 show a composition bias toward low complexity; the sequence is RLGSSPSPPGGVSSLPR. The span at 97–108 shows a compositional bias: basic and acidic residues; it reads SQRDDLSLHSEE. The next 2 helical transmembrane spans lie at 123-143 and 177-197; these read FVSA…AYAI and IIAG…LLMV.

Belongs to the TMEM74 family.

The protein resides in the membrane. The polypeptide is Transmembrane protein 74B (TMEM74B) (Homo sapiens (Human)).